The primary structure comprises 556 residues: 2-succinyl-5-enolpyruvyl-6-hydroxy-3-cyclohexene-1-carboxylate synthase (556 aa).

The protein belongs to the TPP enzyme family. MenD subfamily. In terms of assembly, homodimer. Mg(2+) serves as cofactor. Requires Mn(2+) as cofactor. The cofactor is thiamine diphosphate.

The catalysed reaction is isochorismate + 2-oxoglutarate + H(+) = 5-enolpyruvoyl-6-hydroxy-2-succinyl-cyclohex-3-ene-1-carboxylate + CO2. It functions in the pathway quinol/quinone metabolism; 1,4-dihydroxy-2-naphthoate biosynthesis; 1,4-dihydroxy-2-naphthoate from chorismate: step 2/7. Its pathway is quinol/quinone metabolism; menaquinone biosynthesis. Catalyzes the thiamine diphosphate-dependent decarboxylation of 2-oxoglutarate and the subsequent addition of the resulting succinic semialdehyde-thiamine pyrophosphate anion to isochorismate to yield 2-succinyl-5-enolpyruvyl-6-hydroxy-3-cyclohexene-1-carboxylate (SEPHCHC). The sequence is that of 2-succinyl-5-enolpyruvyl-6-hydroxy-3-cyclohexene-1-carboxylate synthase from Salmonella typhi.